Consider the following 183-residue polypeptide: MTATEQQLALIKQSIKSVPDYPKPGILFRDVTSLLENSRAYAASIALLADRFRDAGLTKIVGTEARGFLFGTPVALALGLGFVPVRKPGKLPRETISENYVLEYGTDGLEIHKDAIVPGDKVLVVDDLLATGGTICATVKLIRRLGGEVQDAAFVINLAYLGGETLLNSIGVASYSLVLFPGH.

This sequence belongs to the purine/pyrimidine phosphoribosyltransferase family. As to quaternary structure, homodimer.

It localises to the cytoplasm. It catalyses the reaction AMP + diphosphate = 5-phospho-alpha-D-ribose 1-diphosphate + adenine. It participates in purine metabolism; AMP biosynthesis via salvage pathway; AMP from adenine: step 1/1. Catalyzes a salvage reaction resulting in the formation of AMP, that is energically less costly than de novo synthesis. The sequence is that of Adenine phosphoribosyltransferase from Sodalis glossinidius (strain morsitans).